We begin with the raw amino-acid sequence, 175 residues long: Ribulose bisphosphate carboxylase small subunit, chloroplastic (175 aa).

Residues 1–46 (MAPTVMASSATSVAPFQGLKSTAGLPVSRRSNGASLGSVSNGGRIR) constitute a chloroplast transit peptide.

It belongs to the RuBisCO small chain family. As to quaternary structure, heterohexadecamer of 8 large and 8 small subunits.

Its subcellular location is the plastid. It localises to the chloroplast. Its function is as follows. RuBisCO catalyzes two reactions: the carboxylation of D-ribulose 1,5-bisphosphate, the primary event in carbon dioxide fixation, as well as the oxidative fragmentation of the pentose substrate. Both reactions occur simultaneously and in competition at the same active site. Although the small subunit is not catalytic it is essential for maximal activity. The chain is Ribulose bisphosphate carboxylase small subunit, chloroplastic from Aegilops tauschii (Tausch's goatgrass).